A 91-amino-acid polypeptide reads, in one-letter code: MSQLAHNLTLSIFEPLRTTGTIVCTIGPSTQSVEALKGLIKSGMSVARMNFSHGSHEYHQTTINNVRQAAAELGVNIAIALDTKGPEIRTG.

Residue Arg48 participates in substrate binding. Positions 50, 52, 82, and 83 each coordinate K(+). Position 50–53 (50–53) interacts with ATP; that stretch reads NFSH. An ATP-binding site is contributed by Arg89.

This sequence belongs to the pyruvate kinase family. Homotetramer. Mg(2+) serves as cofactor. K(+) is required as a cofactor.

The enzyme catalyses pyruvate + ATP = phosphoenolpyruvate + ADP + H(+). Its pathway is carbohydrate degradation; glycolysis; pyruvate from D-glyceraldehyde 3-phosphate: step 5/5. The chain is Pyruvate kinase from Leishmania braziliensis.